The primary structure comprises 129 residues: Large-conductance mechanosensitive channel (129 aa).

Helical transmembrane passes span 10–30 and 70–90; these read FAVK…GAFG and AVML…VIAI.

It belongs to the MscL family. Homopentamer.

Its subcellular location is the cell inner membrane. In terms of biological role, channel that opens in response to stretch forces in the membrane lipid bilayer. May participate in the regulation of osmotic pressure changes within the cell. The protein is Large-conductance mechanosensitive channel of Actinobacillus pleuropneumoniae serotype 3 (strain JL03).